The primary structure comprises 522 residues: MSNRVIIFDTTLRDGEQALAASLSVKEKLQIAMALERLGVDVMEVGFPVSSPGDFESVQTIARTIKNSRVCALSRALEKDIDAAAQALSVADQFRIHTFISTSTIHVESKLKRSFDQVLEMAVGAVKYARRFTDDVEFSCEDAGRTPIDNLCRMVEAAILAGARTINIPDTVGYTVPSEFGNIIQTLFNRVPNIDQAVISVHCHDDLGLSVANSITAVQHGARQIECTINGIGERAGNCSLEEIAMILATRKGMLGLETGINAKEIHRTSNLVSQLCNMPVQANKAIVGANAFTHSSGIHQDGMLKAQNTYEIMTPESIGLNRNNLNMTSRSGRHVIKHRMEEMGYSEHDYNMDTLYEEFLKLADKKGQVFDYDLEALAFMEAQAEEDNHYQLQQLVVQSDSTEGVATATVRIEVGGEIKTEAATGNGPVDAAYNAIARATDRRIDIISYKLGAKGVGQNALGQVDITAVYHEQNFHGVGLATDVVEASARALVHVMNLTCRADKVADYKQSMQKNRELGGV.

The 263-residue stretch at 5–267 (VIIFDTTLRD…ETGINAKEIH (263 aa)) folds into the Pyruvate carboxyltransferase domain. Mn(2+) contacts are provided by D14, H202, H204, and N238. A regulatory domain region spans residues 392-522 (QLQQLVVQSD…MQKNRELGGV (131 aa)).

It belongs to the alpha-IPM synthase/homocitrate synthase family. LeuA type 1 subfamily. Homodimer. The cofactor is Mn(2+).

It is found in the cytoplasm. The catalysed reaction is 3-methyl-2-oxobutanoate + acetyl-CoA + H2O = (2S)-2-isopropylmalate + CoA + H(+). It functions in the pathway amino-acid biosynthesis; L-leucine biosynthesis; L-leucine from 3-methyl-2-oxobutanoate: step 1/4. Catalyzes the condensation of the acetyl group of acetyl-CoA with 3-methyl-2-oxobutanoate (2-ketoisovalerate) to form 3-carboxy-3-hydroxy-4-methylpentanoate (2-isopropylmalate). The protein is 2-isopropylmalate synthase of Shewanella putrefaciens (strain CN-32 / ATCC BAA-453).